The following is a 223-amino-acid chain: Deoxyribose-phosphate aldolase (223 aa).

The Proton donor/acceptor role is filled by D92. K154 acts as the Schiff-base intermediate with acetaldehyde in catalysis. Residue K182 is the Proton donor/acceptor of the active site.

The protein belongs to the DeoC/FbaB aldolase family. DeoC type 1 subfamily.

It localises to the cytoplasm. The enzyme catalyses 2-deoxy-D-ribose 5-phosphate = D-glyceraldehyde 3-phosphate + acetaldehyde. The protein operates within carbohydrate degradation; 2-deoxy-D-ribose 1-phosphate degradation; D-glyceraldehyde 3-phosphate and acetaldehyde from 2-deoxy-alpha-D-ribose 1-phosphate: step 2/2. Functionally, catalyzes a reversible aldol reaction between acetaldehyde and D-glyceraldehyde 3-phosphate to generate 2-deoxy-D-ribose 5-phosphate. The polypeptide is Deoxyribose-phosphate aldolase (Haemophilus influenzae (strain 86-028NP)).